The primary structure comprises 668 residues: Macrolide export ATP-binding/permease protein MacB 1/2 (668 aa).

The ABC transporter domain occupies 9 to 247 (IRLRGVGREY…PGPGPAQAPQ (239 aa)). 45-52 (GASGSGKS) contacts ATP. Residues 230–257 (RTGAPAADPGPGPAQAPQPAPQPAPVQA) form a disordered region. Pro residues predominate over residues 237–255 (DPGPGPAQAPQPAPQPAPV). 4 consecutive transmembrane segments (helical) span residues 294-314 (FLTMLGIIIGIASVVSVVALG), 541-561 (LALLIAAIAVISLVVGGIGVM), 598-618 (LVCVIGGIAGILAALGFGLAF), and 634-654 (MLAALASACAIGLAFGYLPAV).

It belongs to the ABC transporter superfamily. Macrolide exporter (TC 3.A.1.122) family. In terms of assembly, homodimer.

Its subcellular location is the cell inner membrane. Its function is as follows. Non-canonical ABC transporter that contains transmembrane domains (TMD), which form a pore in the inner membrane, and an ATP-binding domain (NBD), which is responsible for energy generation. Confers resistance against macrolides. The sequence is that of Macrolide export ATP-binding/permease protein MacB 1/2 from Paracoccus denitrificans (strain Pd 1222).